Reading from the N-terminus, the 206-residue chain is Ribosomal RNA small subunit methyltransferase G (206 aa).

Residues G73, L78, 124–125, and R139 each bind S-adenosyl-L-methionine; that span reads VE.

It belongs to the methyltransferase superfamily. RNA methyltransferase RsmG family.

The protein resides in the cytoplasm. The enzyme catalyses guanosine(527) in 16S rRNA + S-adenosyl-L-methionine = N(7)-methylguanosine(527) in 16S rRNA + S-adenosyl-L-homocysteine. Functionally, specifically methylates the N7 position of guanine in position 527 of 16S rRNA. The chain is Ribosomal RNA small subunit methyltransferase G from Photobacterium profundum (strain SS9).